The primary structure comprises 201 residues: Recombination protein RecR (201 aa).

The C4-type zinc finger occupies Cys60 to Cys75. The 96-residue stretch at Ala83–Pro178 folds into the Toprim domain.

The protein belongs to the RecR family.

Functionally, may play a role in DNA repair. It seems to be involved in an RecBC-independent recombinational process of DNA repair. It may act with RecF and RecO. In Maricaulis maris (strain MCS10) (Caulobacter maris), this protein is Recombination protein RecR.